A 322-amino-acid polypeptide reads, in one-letter code: Peptidase 1 (322 aa).

The N-terminal stretch at 1–18 (MKFVLAIASLLVLSVVYA) is a signal peptide. Positions 19 to 99 (YPSEIRTFEE…LKKEFDLDAG (81 aa)) are excised as a propeptide. Residues Cys-131 and Cys-171 are joined by a disulfide bond. Cys-134 is an active-site residue. An N-linked (GlcNAc...) asparagine glycan is attached at Asn-152. Active-site residues include His-270 and Asn-290.

It belongs to the peptidase C1 family. As to expression, expressed in the gut.

It localises to the secreted. The enzyme catalyses Broad endopeptidase specificity.. Its function is as follows. Probable thiol protease. The sequence is that of Peptidase 1 from Psoroptes ovis (Sheep scab mite).